The chain runs to 297 residues: Ribosomal RNA small subunit methyltransferase H (297 aa).

S-adenosyl-L-methionine-binding positions include 36-38 (GGH), Asp-56, Leu-90, Asp-104, and His-111.

It belongs to the methyltransferase superfamily. RsmH family.

It is found in the cytoplasm. It catalyses the reaction cytidine(1402) in 16S rRNA + S-adenosyl-L-methionine = N(4)-methylcytidine(1402) in 16S rRNA + S-adenosyl-L-homocysteine + H(+). Specifically methylates the N4 position of cytidine in position 1402 (C1402) of 16S rRNA. This is Ribosomal RNA small subunit methyltransferase H from Dictyoglomus thermophilum (strain ATCC 35947 / DSM 3960 / H-6-12).